The following is a 544-amino-acid chain: Putative pentatricopeptide repeat-containing protein At5g59200, chloroplastic (544 aa).

A disordered region spans residues 1-21 (MISSLAAITGGPSTFRRDPDS). The N-terminal 25 residues, 1 to 25 (MISSLAAITGGPSTFRRDPDSNTLR), are a transit peptide targeting the chloroplast. 11 PPR repeats span residues 60–90 (DAFVVFELIRVCSTLDSVDYAYDVFSYVSNP), 91–125 (NVYLYTAMIDGFVSSGRSADGVSLYHRMIHNSVLP), 127–156 (NYVITSVLKACDLKVCREIHAQVLKLGFGS), 157–187 (SRSVGLKMMEIYGKSGELVNAKKMFDEMPDR), 188–218 (DHVAATVMINCYSECGFIKEALELFQDVKIK), 219–253 (DTVCWTAMIDGLVRNKEMNKALELFREMQMENVSA), 254–288 (NEFTAVCVLSACSDLGALELGRWVHSFVENQRMEL), 289–319 (SNFVGNALINMYSRCGDINEARRVFRVMRDK), 320–354 (DVISYNTMISGLAMHGASVEAINEFRDMVNRGFRP), 355–385 (NQVTLVALLNACSHGGLLDIGLEVFNSMKRV), and 391–421 (QIEHYGCIVDLLGRVGRLEEAYRFIENIPIE). The interval 426–501 (MLGTLLSACK…EPGCSTIEVD (76 aa)) is type E motif. The segment at 502-532 (NQIHEFLVGDIAHPHKEAIYQRLQELNRILR) is type E(+) motif.

Belongs to the PPR family. PCMP-E subfamily.

The protein resides in the plastid. The protein localises to the chloroplast. Its function is as follows. Involved in RNA editing event in chloroplasts. Required for the editing of a single site in rpl23 transcript. In Arabidopsis thaliana (Mouse-ear cress), this protein is Putative pentatricopeptide repeat-containing protein At5g59200, chloroplastic (PCMP-E41).